The chain runs to 552 residues: Polypyrimidine tract-binding protein 3 (552 aa).

N-acetylmethionine is present on M1. S17 is subject to Phosphoserine. Over residues M32–N43 the composition is skewed to polar residues. Positions M32–C55 are disordered. RRM domains follow at residues R59–N143, L182–L258, and S358–H432. Residue K65 forms a Glycyl lysine isopeptide (Lys-Gly) (interchain with G-Cter in SUMO2) linkage. Y127 carries the phosphotyrosine modification. T138 carries the post-translational modification Phosphothreonine. K216 is covalently cross-linked (Glycyl lysine isopeptide (Lys-Gly) (interchain with G-Cter in SUMO2)). N6-acetyllysine is present on K423. The tract at residues V435–P455 is disordered. At S454 the chain carries Phosphoserine. Residues A475–S550 form the RRM 4 domain.

Interacts with THBS4 (via the acidic amphipathic C-terminus). In terms of tissue distribution, expressed in several hematopoietic cell lines examined.

RNA-binding protein that mediates pre-mRNA alternative splicing regulation. Plays a role in the regulation of cell proliferation, differentiation and migration. Positive regulator of EPO-dependent erythropoiesis. Participates in cell differentiation regulation by repressing tissue-specific exons. Promotes FAS exon 6 skipping. Binds RNA, preferentially to both poly(G) and poly(U). In Homo sapiens (Human), this protein is Polypyrimidine tract-binding protein 3 (PTBP3).